A 123-amino-acid chain; its full sequence is Large ribosomal subunit protein bL17 (123 aa).

The protein belongs to the bacterial ribosomal protein bL17 family. Part of the 50S ribosomal subunit. Contacts protein L32.

The sequence is that of Large ribosomal subunit protein bL17 from Borrelia hermsii (strain HS1 / DAH).